Here is a 145-residue protein sequence, read N- to C-terminus: Hemoglobin subunit beta (145 aa).

Positions 1 to 145 (MLTSEEKAAV…VANALAHRYH (145 aa)) constitute a Globin domain. Thr-11 is subject to Phosphothreonine. Lys-58 bears the N6-acetyllysine mark. His-62 is a heme b binding site. Residue Lys-81 is modified to N6-acetyllysine. His-91 contacts heme b. Cys-92 carries the S-nitrosocysteine modification.

Belongs to the globin family. In terms of assembly, heterotetramer of two alpha chains and two beta chains. In terms of tissue distribution, red blood cells.

Its function is as follows. Involved in oxygen transport from the lung to the various peripheral tissues. In Rangifer tarandus (Reindeer), this protein is Hemoglobin subunit beta (HBB).